Reading from the N-terminus, the 180-residue chain is Acireductone dioxygenase (180 aa).

The Fe(2+) site is built by His-88, His-90, Glu-94, and His-133. Ni(2+) is bound by residues His-88, His-90, Glu-94, and His-133.

This sequence belongs to the acireductone dioxygenase (ARD) family. In terms of assembly, monomer. Interacts with MMP14. It depends on Fe(2+) as a cofactor. The cofactor is Ni(2+).

It is found in the cytoplasm. It localises to the nucleus. The protein resides in the cell membrane. The enzyme catalyses 1,2-dihydroxy-5-(methylsulfanyl)pent-1-en-3-one + O2 = 4-methylsulfanyl-2-oxobutanoate + formate + 2 H(+). It carries out the reaction 1,2-dihydroxy-5-(methylsulfanyl)pent-1-en-3-one + O2 = 3-(methylsulfanyl)propanoate + CO + formate + 2 H(+). It participates in amino-acid biosynthesis; L-methionine biosynthesis via salvage pathway; L-methionine from S-methyl-5-thio-alpha-D-ribose 1-phosphate: step 5/6. Functionally, catalyzes 2 different reactions between oxygen and the acireductone 1,2-dihydroxy-3-keto-5-methylthiopentene (DHK-MTPene) depending upon the metal bound in the active site. Fe-containing acireductone dioxygenase (Fe-ARD) produces formate and 2-keto-4-methylthiobutyrate (KMTB), the alpha-ketoacid precursor of methionine in the methionine recycle pathway. Ni-containing acireductone dioxygenase (Ni-ARD) produces methylthiopropionate, carbon monoxide and formate, and does not lie on the methionine recycle pathway. The sequence is that of Acireductone dioxygenase from Gallus gallus (Chicken).